Consider the following 73-residue polypeptide: RNA-binding protein Hfq (73 aa).

The 61-residue stretch at 8 to 68 (DQFLNQIRKD…ISTFAPQKNV (61 aa)) folds into the Sm domain.

It belongs to the Hfq family. Homohexamer.

RNA chaperone that binds small regulatory RNA (sRNAs) and mRNAs to facilitate mRNA translational regulation in response to envelope stress, environmental stress and changes in metabolite concentrations. Also binds with high specificity to tRNAs. The sequence is that of RNA-binding protein Hfq from Bacillus pumilus (strain SAFR-032).